Reading from the N-terminus, the 386-residue chain is MEAVEANTLQQERLQAIAEKRKRQTEIENKRRQLEDDRRQLQHLKSKALRERWLLEGAPSSASEEDEAMKKQMQEDEVKTKELEETIQRLERELESLENSSSVTSTKENLAEAAAPAKEEKKENIPSVQKSPLGTAIAEKKVSSSPMKAVQGTDMMKAAMYSVEITVEKDRVTGETKVLSSTTLLPQNHCVQGIKVYEDELKVVHAVSAEDGALQNGAQPLSSSEVDELLHKADEVTLGEATASGDAPGSATSSQKATPRREITGLQAKPRENSTEGAEPSREQPVTMIFMGYQNVEDENETKKVLGLEGTIKAELVVIEDAESKAEPEGKDHAPPNGTALEPAAAPLQGDEVPGGQKPGTNATEAKEAEPDMDAKKQRCKCCTVM.

Residues Val-4 to Ala-115 adopt a coiled-coil conformation. Disordered stretches follow at residues Arg-21–Gln-40, Glu-51–Ala-149, Glu-240–Phe-290, and Asp-321–Gln-378. Basic and acidic residues-rich tracts occupy residues Gln-24–Gln-40 and Ala-68–Glu-95. The segment covering Leu-97–Pro-116 has biased composition (low complexity). Composition is skewed to basic and acidic residues over residues Pro-259 to Arg-282, Ala-322 to Ala-334, and Glu-365 to Lys-377. Residues Cys-380 and Cys-382 are each lipidated (S-palmitoyl cysteine). Cys-383 is modified (cysteine methyl ester). The S-farnesyl cysteine moiety is linked to residue Cys-383. Residues Thr-384–Met-386 constitute a propeptide, removed in mature form.

This sequence belongs to the paralemmin family. As to quaternary structure, interacts with dopamine receptor DRD3. In terms of processing, phosphorylated. Expressed in the lens (at protein level). Highly expressed in forebrain and cerebellum with lower expression in adrenal gland and heart. Expression weak or undetectable in other tissues.

It is found in the cell membrane. Its subcellular location is the cell projection. The protein localises to the filopodium membrane. It localises to the axon. The protein resides in the dendrite. It is found in the dendritic spine. Its subcellular location is the basolateral cell membrane. The protein localises to the apicolateral cell membrane. Its function is as follows. Involved in plasma membrane dynamics and cell process formation. Isoform 1 and isoform 2 are necessary for axonal and dendritic filopodia induction, for dendritic spine maturation and synapse formation in a palmitoylation-dependent manner. The protein is Paralemmin-1 (PALM) of Gallus gallus (Chicken).